Here is a 279-residue protein sequence, read N- to C-terminus: Aquaporin A (279 aa).

Over 1–40 (MVKVVPLRFITYDPLKDPSKMIYRRPISKPVKAFKGFFSE) the chain is Cytoplasmic. A helical membrane pass occupies residues 41-61 (FLGTLYLVYFCGGSVCAAFAV). The Extracellular portion of the chain corresponds to 62–69 (AGDSAARA). The helical transmembrane segment at 70–90 (LLGGLIQGMALAALIWAVSGV) threads the bilayer. Residues 91–114 (SGCNLNPAVTLANLLSGRVGLIDS) lie on the Cytoplasmic side of the membrane. The NPA 1 signature appears at 96 to 98 (NPA). A helical transmembrane segment spans residues 115-135 (LYYVAAQILGCIAGAGILYGC). Residues 136–158 (LPNMYRIDLGVPHLAPGMNTGQA) are Extracellular-facing. A helical transmembrane segment spans residues 159–179 (FLMEMMLTSILCLCVLGTSVF). Over 180–188 (NVWDRRLNR) the chain is Cytoplasmic. The chain crosses the membrane as a helical span at residues 189 to 209 (IAPFAIGLALFIGVAIGFNFS). Residues 210–227 (GGALNPVRVLGPSIISGV) are Extracellular-facing. The NPA 2 signature appears at 214-216 (NPV). The helical transmembrane segment at 228–248 (WSHHWVYWLGPIVGAILAAFI) threads the bilayer. The Cytoplasmic portion of the chain corresponds to 249–279 (YRCLLQERFDVIERPGYIAPLIDPSTAVSSY).

This sequence belongs to the MIP/aquaporin (TC 1.A.8) family.

The protein localises to the cell membrane. Functionally, may form a water-specific channel. Required for prolonged spore survival on fruiting bodies. The polypeptide is Aquaporin A (aqpA) (Dictyostelium discoideum (Social amoeba)).